We begin with the raw amino-acid sequence, 952 residues long: UvrABC system protein A (952 aa).

31 to 38 (GVSGSGKS) is an ATP binding site. A C4-type zinc finger spans residues 253–280 (CPEHGSVLEELEPRIFSFNSPYGACPAC). 2 ABC transporter domains span residues 309–591 (WSRG…PQSL) and 611–938 (GNGK…AFLA). Residue 643-650 (GPSGSGKS) coordinates ATP. The C4-type zinc-finger motif lies at 742-768 (CEACGGDGTVKIEMLFLPDLYVPCEVC).

The protein belongs to the ABC transporter superfamily. UvrA family. As to quaternary structure, forms a heterotetramer with UvrB during the search for lesions.

The protein localises to the cytoplasm. Functionally, the UvrABC repair system catalyzes the recognition and processing of DNA lesions. UvrA is an ATPase and a DNA-binding protein. A damage recognition complex composed of 2 UvrA and 2 UvrB subunits scans DNA for abnormalities. When the presence of a lesion has been verified by UvrB, the UvrA molecules dissociate. The chain is UvrABC system protein A from Thermus thermophilus (strain ATCC 27634 / DSM 579 / HB8).